A 147-amino-acid chain; its full sequence is Large ribosomal subunit protein bL9 (147 aa).

This sequence belongs to the bacterial ribosomal protein bL9 family.

In terms of biological role, binds to the 23S rRNA. The chain is Large ribosomal subunit protein bL9 from Mycoplasma capricolum subsp. capricolum (strain California kid / ATCC 27343 / NCTC 10154).